Reading from the N-terminus, the 331-residue chain is LIM/homeobox protein Lhx9 (331 aa).

2 consecutive LIM zinc-binding domains span residues 71 to 132 (TLCA…FSVK) and 133 to 194 (RCAR…LVQG). Residues 253–275 (ETDLDRDQTYPPSQKTKRMRTSF) form a disordered region. The segment at residues 268-327 (TKRMRTSFKHHQLRTMKSYFAINHNPDAKDLKQLAQKTGLTKRVLQGEQCSGFNSHTTRR) is a DNA-binding region (homeobox).

The protein resides in the nucleus. In terms of biological role, may be involved in gonadal development. This Xenopus laevis (African clawed frog) protein is LIM/homeobox protein Lhx9 (lhx9).